Consider the following 333-residue polypeptide: Photosystem II assembly lipoprotein Ycf48 (333 aa).

The first 23 residues, M1–G23, serve as a signal peptide directing secretion. A lipid anchor (N-palmitoyl cysteine) is attached at C24. A lipid anchor (S-diacylglycerol cysteine) is attached at C24.

This sequence belongs to the Ycf48 family. In terms of assembly, part of early PSII assembly complexes which includes D1 (psbA) and PsbI; not found in mature PSII. Binds to the lumenal side of PSII complexes. Interacts with YidC.

The protein localises to the cellular thylakoid membrane. In terms of biological role, a factor required for optimal assembly of photosystem II (PSII), acting in the early stages of PSII assembly. Also plays a role in replacement of photodamaged D1 (psbA). Assists YidC in synthesis of chlorophyll-binding proteins. The chain is Photosystem II assembly lipoprotein Ycf48 from Synechococcus sp. (strain CC9605).